Reading from the N-terminus, the 114-residue chain is Large ribosomal subunit protein bL20c (114 aa).

Belongs to the bacterial ribosomal protein bL20 family.

It localises to the plastid. Its subcellular location is the chloroplast. Binds directly to 23S ribosomal RNA and is necessary for the in vitro assembly process of the 50S ribosomal subunit. It is not involved in the protein synthesizing functions of that subunit. In Guillardia theta (Cryptophyte), this protein is Large ribosomal subunit protein bL20c (rpl20).